Consider the following 187-residue polypeptide: Elongation factor P (187 aa).

Belongs to the elongation factor P family.

The protein resides in the cytoplasm. It participates in protein biosynthesis; polypeptide chain elongation. Involved in peptide bond synthesis. Stimulates efficient translation and peptide-bond synthesis on native or reconstituted 70S ribosomes in vitro. Probably functions indirectly by altering the affinity of the ribosome for aminoacyl-tRNA, thus increasing their reactivity as acceptors for peptidyl transferase. This Corynebacterium aurimucosum (strain ATCC 700975 / DSM 44827 / CIP 107346 / CN-1) (Corynebacterium nigricans) protein is Elongation factor P.